Reading from the N-terminus, the 266-residue chain is Energy-coupling factor transporter transmembrane protein EcfT 1 (266 aa).

The next 5 membrane-spanning stretches (helical) occupy residues I33–L53, L73–I93, L107–I127, V152–M172, and H243–L263.

It belongs to the energy-coupling factor EcfT family. Forms a stable energy-coupling factor (ECF) transporter complex composed of 2 membrane-embedded substrate-binding proteins (S component), 2 ATP-binding proteins (A component) and 2 transmembrane proteins (T component). May be able to interact with more than 1 S component at a time.

Its subcellular location is the cell membrane. Its function is as follows. Transmembrane (T) component of an energy-coupling factor (ECF) ABC-transporter complex. Unlike classic ABC transporters this ECF transporter provides the energy necessary to transport a number of different substrates. This chain is Energy-coupling factor transporter transmembrane protein EcfT 1, found in Listeria monocytogenes serotype 1/2a (strain 08-5578).